The following is a 233-amino-acid chain: MEAYKMFAFVVLLATTLYQAYATDPTQLQDFCVGVNKPNDGLFVNGLFCKDPMEVNPDDFLFRGLNMPANTDNALGFAATLVTAANLPGLNTLGISVARLDFAPHGLNPPHTHPRATEVFVVLEGTFYVGFVTSNLADGGNKLFAKVLNKGDVFVFPQGLIHFQLNIGNYPGVGISGLSSQNPGVITIANAVFGPEHLSQLMFLLRPSISMRIWSSFFRIGSQVVAATTSMCS.

Positions 1-22 are cleaved as a signal peptide; that stretch reads MEAYKMFAFVVLLATTLYQAYA. A disulfide bridge connects residues Cys32 and Cys49. A Cupin type-1 domain is found at 63–215; it reads RGLNMPANTD…RPSISMRIWS (153 aa). Mn(2+) is bound by residues His111, His113, Glu118, and His162.

Belongs to the germin family. As to quaternary structure, oligomer (believed to be a pentamer but probably hexamer). As to expression, expressed at high levels in unstressed roots.

Its subcellular location is the secreted. It localises to the extracellular space. It is found in the apoplast. May be involved in seed germination. The protein is Germin-like protein of Mesembryanthemum crystallinum (Common ice plant).